The primary structure comprises 182 residues: Peptidoglycan recognition protein 1 (182 aa).

Positions 1–18 (MLFACALLALLGLATSCS) are cleaved as a signal peptide. Intrachain disulfides connect Cys-17/Cys-141, Cys-33/Cys-78, and Cys-54/Cys-60. The 129-residue stretch at 39–167 (HPVRYVVISH…RDVQSTLSPG (129 aa)) folds into the N-acetylmuramoyl-L-alanine amidase domain.

This sequence belongs to the N-acetylmuramoyl-L-alanine amidase 2 family. Homodimer; disulfide-linked. Interacts with HSPA1A; this interaction forms a cytotoxic complex that is released by lymphokine-activated killer cells. Interacts with HSPBP1; this interaction blocks the cytotoxic activity of the PGLYRP1-HSPA1A complex. As to expression, strongly expressed in spleen and lung. Also detected in brain and thymus. In the lung, expressed in the intraalveolar space, in the brain, expressed in the Purkinje cells of the cerebellum and in certain layers of neurons in the hippocampus. Also detected in cells filling the space within the intestinal villus.

Its subcellular location is the cytoplasm. The protein localises to the secreted. Its function is as follows. Innate immunity protein that plays several important functions in antimicrobial and antitumor defense systems. Acts as a pattern receptor that binds to murein peptidoglycans (PGN) of Gram-positive bacteria and thus provides bactericidal activity. Forms an equimolar complex with heat shock protein HSPA1A and induces programmed cell death through apoptosis and necroptosis in tumor cell lines by activating the TNFR1 receptor on the target cell membrane. In addition, acts in complex with the Ca(2+)-binding protein S100A4 as a chemoattractant able to induce lymphocyte movement. Mechanistically, this complex acts as a ligand of the chemotactic receptors CCR5 and CXCR3 which are present on the cells of the immune system. Also promotes the activation of lymphocytes that become able to kill virus-infected cells as well as tumor cells by modulating the spectrum of their target-cell specificity. Induction of cytotoxicity on monocyte surface requires interaction with TREM1 receptor. This Mus musculus (Mouse) protein is Peptidoglycan recognition protein 1 (Pglyrp1).